The sequence spans 1068 residues: Cytospin-B (1068 aa).

The interval 1–221 (MRSAAKPWNP…VDGTSVSPGD (221 aa)) is disordered. Arg2 is lipidated: N-myristoyl glycine. Low complexity predominate over residues 29–40 (SSGMKSSKSSTS). 2 positions are modified to phosphoserine: Ser38 and Ser55. At Thr78 the chain carries Phosphothreonine. 5 positions are modified to phosphoserine: Ser112, Ser131, Ser134, Ser137, and Ser138. The segment covering 126–144 (SNPRKSVSSPTSSNTPTPT) has biased composition (low complexity). Position 142 is a phosphothreonine (Thr142). Over residues 154 to 200 (PKQENEGGEKAALESQVRELLAEAKAKDSEINRLRSELKKYKEKRTL) the composition is skewed to basic and acidic residues. Residues Ser218 and Ser241 each carry the phosphoserine modification. Composition is skewed to polar residues over residues 261-295 (PNSEGAASHTGDSSCPTSITQESSFGSPTGNQMSS), 309-323 (LRTSGSSSSDVTKAS), and 337-367 (ETPSRPLSSTSNPFKSSKCSTAGSSPNSVSE). The segment at 261–367 (PNSEGAASHT…AGSSPNSVSE (107 aa)) is disordered. 4 positions are modified to phosphoserine: Ser361, Ser366, Ser369, and Ser425. Residues 579–773 (EVQEMLKVAR…QKELGDVQGH (195 aa)) adopt a coiled-coil conformation. Residues 777–796 (VTSRAAPPPVDEEPESSEVD) form a disordered region. Phosphoserine occurs at positions 847 and 863. 2 disordered regions span residues 859–885 (AAAVSPMQRHSTYSSVRPASRGVTQRL) and 898–922 (GRTETLKPDPHLRKSPSLESLSRPP). Residues 866 to 875 (QRHSTYSSVR) are compositionally biased toward polar residues. Residues 898–909 (GRTETLKPDPHL) are compositionally biased toward basic and acidic residues. 2 positions are modified to phosphoserine: Ser912 and Ser914. Residues 912 to 922 (SPSLESLSRPP) show a composition bias toward low complexity. The region spanning 962–1067 (GSKRNALLKW…YVAQIYKYFE (106 aa)) is the Calponin-homology (CH) domain.

It belongs to the cytospin-A family. In terms of tissue distribution, highly expressed in testis. Barely detectable in other tissues. Also highly expressed in some cancer cell lines.

The protein localises to the nucleus. It is found in the membrane. This is Cytospin-B (SPECC1) from Homo sapiens (Human).